Reading from the N-terminus, the 51-residue chain is Large ribosomal subunit protein eL39 (51 aa).

The protein belongs to the eukaryotic ribosomal protein eL39 family. As to quaternary structure, interacts with YIH1.

This is Large ribosomal subunit protein eL39 (RPL39) from Kluyveromyces lactis (strain ATCC 8585 / CBS 2359 / DSM 70799 / NBRC 1267 / NRRL Y-1140 / WM37) (Yeast).